A 379-amino-acid polypeptide reads, in one-letter code: Protein RecA (379 aa).

Residue 79-86 coordinates ATP; it reads GPESSGKT.

Belongs to the RecA family.

It is found in the cytoplasm. In terms of biological role, can catalyze the hydrolysis of ATP in the presence of single-stranded DNA, the ATP-dependent uptake of single-stranded DNA by duplex DNA, and the ATP-dependent hybridization of homologous single-stranded DNAs. It interacts with LexA causing its activation and leading to its autocatalytic cleavage. The chain is Protein RecA from Streptococcus uberis (strain ATCC BAA-854 / 0140J).